The following is a 136-amino-acid chain: Histone H2A (136 aa).

A compositionally biased stretch (gly residues) spans 1–11; the sequence is MTGGKSAGGKA. Residues 1–23 form a disordered region; that stretch reads MTGGKSAGGKAGTTKNAQSRSSK. An N6-acetyllysine mark is found at Lys-5 and Lys-10. Gln-107 is modified (N5-methylglutamine). Ser-133 bears the Phosphoserine mark. The [ST]-Q motif motif lies at 133–134; the sequence is SQ.

The protein belongs to the histone H2A family. In terms of assembly, the nucleosome is a histone octamer containing two molecules each of H2A, H2B, H3 and H4 assembled in one H3-H4 heterotetramer and two H2A-H2B heterodimers. The octamer wraps approximately 147 bp of DNA. Phosphorylated to form H2AS128ph (gamma-H2A) in response to DNA double-strand breaks (DSBs) generated by exogenous genotoxic agents and by stalled replication forks. Phosphorylation is dependent on the DNA damage checkpoint kinases MEC1/ATR and TEL1/ATM, spreads on either side of a detected DSB site and may mark the surrounding chromatin for recruitment of proteins required for DNA damage signaling and repair. Gamma-H2A is removed from the DNA prior to the strand invasion-primer extension step of the repair process and subsequently dephosphorylated. Dephosphorylation is necessary for efficient recovery from the DNA damage checkpoint. Post-translationally, acetylated by ESA1 to form H2AK4ac and H2AK7ac.

Its subcellular location is the nucleus. It localises to the chromosome. Functionally, core component of nucleosome which plays a central role in DNA double strand break (DSB) repair. Nucleosomes wrap and compact DNA into chromatin, limiting DNA accessibility to the cellular machineries which require DNA as a template. Histones thereby play a central role in transcription regulation, DNA repair, DNA replication and chromosomal stability. DNA accessibility is regulated via a complex set of post-translational modifications of histones, also called histone code, and nucleosome remodeling. In Botryotinia fuckeliana (strain B05.10) (Noble rot fungus), this protein is Histone H2A (hta1).